Consider the following 205-residue polypeptide: Holliday junction branch migration complex subunit RuvA (205 aa).

The domain I stretch occupies residues 1-64; it reads MIGKLKGTID…EDQLKLFGFL (64 aa). Positions 65–143 are domain II; that stretch reads SALEREWFRL…AFVGEMAPSI (79 aa). Residues 144-153 form a flexible linker region; that stretch reads GLKQELGEGV. Residues 153 to 205 form a domain III region; it reads VAAAPVSDAVSALTNLGYSRDQAANAVAAALKNGGEGADSARLIRLGLKELSR.

It belongs to the RuvA family. In terms of assembly, homotetramer. Forms an RuvA(8)-RuvB(12)-Holliday junction (HJ) complex. HJ DNA is sandwiched between 2 RuvA tetramers; dsDNA enters through RuvA and exits via RuvB. An RuvB hexamer assembles on each DNA strand where it exits the tetramer. Each RuvB hexamer is contacted by two RuvA subunits (via domain III) on 2 adjacent RuvB subunits; this complex drives branch migration. In the full resolvosome a probable DNA-RuvA(4)-RuvB(12)-RuvC(2) complex forms which resolves the HJ.

The protein localises to the cytoplasm. Functionally, the RuvA-RuvB-RuvC complex processes Holliday junction (HJ) DNA during genetic recombination and DNA repair, while the RuvA-RuvB complex plays an important role in the rescue of blocked DNA replication forks via replication fork reversal (RFR). RuvA specifically binds to HJ cruciform DNA, conferring on it an open structure. The RuvB hexamer acts as an ATP-dependent pump, pulling dsDNA into and through the RuvAB complex. HJ branch migration allows RuvC to scan DNA until it finds its consensus sequence, where it cleaves and resolves the cruciform DNA. The protein is Holliday junction branch migration complex subunit RuvA of Sinorhizobium medicae (strain WSM419) (Ensifer medicae).